The sequence spans 316 residues: Ribosomal RNA small subunit methyltransferase H (316 aa).

Residues 35 to 37, aspartate 55, phenylalanine 84, aspartate 105, and glutamine 112 contribute to the S-adenosyl-L-methionine site; that span reads AGH.

It belongs to the methyltransferase superfamily. RsmH family.

It localises to the cytoplasm. The enzyme catalyses cytidine(1402) in 16S rRNA + S-adenosyl-L-methionine = N(4)-methylcytidine(1402) in 16S rRNA + S-adenosyl-L-homocysteine + H(+). Specifically methylates the N4 position of cytidine in position 1402 (C1402) of 16S rRNA. This chain is Ribosomal RNA small subunit methyltransferase H, found in Streptococcus pneumoniae (strain Taiwan19F-14).